The chain runs to 379 residues: UDP-N-acetylglucosamine--N-acetylmuramyl-(pentapeptide) pyrophosphoryl-undecaprenol N-acetylglucosamine transferase (379 aa).

UDP-N-acetyl-alpha-D-glucosamine contacts are provided by residues 17-19 (TGG), Asn128, Arg169, Ser197, and Gln298.

The protein belongs to the glycosyltransferase 28 family. MurG subfamily.

It localises to the cell inner membrane. It carries out the reaction di-trans,octa-cis-undecaprenyl diphospho-N-acetyl-alpha-D-muramoyl-L-alanyl-D-glutamyl-meso-2,6-diaminopimeloyl-D-alanyl-D-alanine + UDP-N-acetyl-alpha-D-glucosamine = di-trans,octa-cis-undecaprenyl diphospho-[N-acetyl-alpha-D-glucosaminyl-(1-&gt;4)]-N-acetyl-alpha-D-muramoyl-L-alanyl-D-glutamyl-meso-2,6-diaminopimeloyl-D-alanyl-D-alanine + UDP + H(+). Its pathway is cell wall biogenesis; peptidoglycan biosynthesis. In terms of biological role, cell wall formation. Catalyzes the transfer of a GlcNAc subunit on undecaprenyl-pyrophosphoryl-MurNAc-pentapeptide (lipid intermediate I) to form undecaprenyl-pyrophosphoryl-MurNAc-(pentapeptide)GlcNAc (lipid intermediate II). The polypeptide is UDP-N-acetylglucosamine--N-acetylmuramyl-(pentapeptide) pyrophosphoryl-undecaprenol N-acetylglucosamine transferase (Brucella abortus (strain S19)).